The chain runs to 396 residues: Deoxyuridine 5'-triphosphate nucleotidohydrolase (396 aa).

Residues 280–282 (RSS) and 380–381 (FG) each bind substrate.

The protein belongs to the dUTPase family. Requires Mg(2+) as cofactor.

The catalysed reaction is dUTP + H2O = dUMP + diphosphate + H(+). Its function is as follows. Involved in nucleotide metabolism: produces dUMP, the immediate precursor of thymidine nucleotides and decreases the intracellular concentration of dUTP to avoid uracil incorporation into viral DNA. The chain is Deoxyuridine 5'-triphosphate nucleotidohydrolase from Varicella-zoster virus (strain Dumas) (HHV-3).